The following is a 642-amino-acid chain: Threonine--tRNA ligase (642 aa).

Residues 1–61 form the TGS domain; it reads MPVITLPDGS…HEDASLSIIT (61 aa). The interval 243–534 is catalytic; it reads DHRKIGKQLD…LIEEYAGRFP (292 aa). C334, H385, and H511 together coordinate Zn(2+).

Belongs to the class-II aminoacyl-tRNA synthetase family. Homodimer. Zn(2+) is required as a cofactor.

It is found in the cytoplasm. The enzyme catalyses tRNA(Thr) + L-threonine + ATP = L-threonyl-tRNA(Thr) + AMP + diphosphate + H(+). Functionally, catalyzes the attachment of threonine to tRNA(Thr) in a two-step reaction: L-threonine is first activated by ATP to form Thr-AMP and then transferred to the acceptor end of tRNA(Thr). Also edits incorrectly charged L-seryl-tRNA(Thr). The chain is Threonine--tRNA ligase from Shewanella amazonensis (strain ATCC BAA-1098 / SB2B).